A 254-amino-acid polypeptide reads, in one-letter code: Phosphoglycerate mutase 1 (254 aa).

Residues 10-17 and 23-24 each bind substrate; these read RHGESAWN and SG. Residue His-11 is the Tele-phosphohistidine intermediate of the active site. 2 positions are modified to phosphoserine: Ser-14 and Ser-23. At Tyr-26 the chain carries Phosphotyrosine. Ser-31 is subject to Phosphoserine. Substrate-binding positions include Arg-62, 89–92, and Lys-100; that span reads ERHY. The Proton donor/acceptor role is filled by Glu-89. Lys-106 carries the post-translational modification N6-acetyllysine. 116–117 lines the substrate pocket; sequence RR. Ser-118 carries the post-translational modification Phosphoserine. 187–188 lines the substrate pocket; the sequence is GN. N6-acetyllysine; alternate is present on Lys-251. Residue Lys-251 is modified to N6-succinyllysine; alternate. Lys-253 and Lys-254 each carry N6-acetyllysine.

It belongs to the phosphoglycerate mutase family. BPG-dependent PGAM subfamily. As to quaternary structure, homodimer. Post-translationally, acetylated at Lys-253, Lys-253 and Lys-254 under high glucose condition. Acetylation increases catalytic activity. Under glucose restriction SIRT1 levels dramatically increase and it deacetylates the enzyme.

The catalysed reaction is (2R)-2-phosphoglycerate = (2R)-3-phosphoglycerate. The enzyme catalyses (2R)-3-phospho-glyceroyl phosphate = (2R)-2,3-bisphosphoglycerate + H(+). Catalyzes the interconversion of 2-phosphoglycerate and 3-phosphoglyceratea crucial step in glycolysis, by using 2,3-bisphosphoglycerate. Also catalyzes the interconversion of (2R)-2,3-bisphosphoglycerate and (2R)-3-phospho-glyceroyl phosphate. This is Phosphoglycerate mutase 1 from Pongo abelii (Sumatran orangutan).